Reading from the N-terminus, the 113-residue chain is U11-theraphotoxin-Hhn1d (113 aa).

The first 21 residues, 1–21 (MNTVRVTFLLVFVVAVSLGQA), serve as a signal peptide directing secretion. The propeptide occupies 22 to 74 (DKDENRMEMKDKTEQGKSYLHFAENLLLQKLEDVEAKLLEKDSEKSINSRQKR). Disulfide bonds link C75–C90, C82–C95, and C89–C110.

Belongs to the neurotoxin 14 (magi-1) family. 01 (HNTX-16) subfamily. In terms of tissue distribution, expressed by the venom gland.

It is found in the secreted. In terms of biological role, probable ion channel inhibitor. The protein is U11-theraphotoxin-Hhn1d of Cyriopagopus hainanus (Chinese bird spider).